We begin with the raw amino-acid sequence, 118 residues long: Aspartate 1-decarboxylase 1 (118 aa).

S25 acts as the Schiff-base intermediate with substrate; via pyruvic acid in catalysis. S25 is subject to Pyruvic acid (Ser). A substrate-binding site is contributed by T57. The Proton donor role is filled by Y58. 73-75 serves as a coordination point for substrate; it reads GAA.

The protein belongs to the PanD family. Heterooctamer of four alpha and four beta subunits. Pyruvate serves as cofactor. Is synthesized initially as an inactive proenzyme, which is activated by self-cleavage at a specific serine bond to produce a beta-subunit with a hydroxyl group at its C-terminus and an alpha-subunit with a pyruvoyl group at its N-terminus.

It is found in the cytoplasm. It carries out the reaction L-aspartate + H(+) = beta-alanine + CO2. It participates in cofactor biosynthesis; (R)-pantothenate biosynthesis; beta-alanine from L-aspartate: step 1/1. Its function is as follows. Catalyzes the pyruvoyl-dependent decarboxylation of aspartate to produce beta-alanine. This Gloeobacter violaceus (strain ATCC 29082 / PCC 7421) protein is Aspartate 1-decarboxylase 1.